Here is a 417-residue protein sequence, read N- to C-terminus: NADH-quinone oxidoreductase subunit D (417 aa).

It belongs to the complex I 49 kDa subunit family. As to quaternary structure, NDH-1 is composed of 14 different subunits. Subunits NuoB, C, D, E, F, and G constitute the peripheral sector of the complex.

Its subcellular location is the cell inner membrane. It catalyses the reaction a quinone + NADH + 5 H(+)(in) = a quinol + NAD(+) + 4 H(+)(out). In terms of biological role, NDH-1 shuttles electrons from NADH, via FMN and iron-sulfur (Fe-S) centers, to quinones in the respiratory chain. The immediate electron acceptor for the enzyme in this species is believed to be ubiquinone. Couples the redox reaction to proton translocation (for every two electrons transferred, four hydrogen ions are translocated across the cytoplasmic membrane), and thus conserves the redox energy in a proton gradient. The sequence is that of NADH-quinone oxidoreductase subunit D from Paraburkholderia xenovorans (strain LB400).